A 380-amino-acid polypeptide reads, in one-letter code: Cytochrome b (380 aa).

The next 4 helical transmembrane spans lie at 33–53 (FGSL…FLAM), 77–98 (WLIR…YMHI), 113–133 (WNIG…GYVL), and 178–198 (FFAF…LHLL). Heme b is bound by residues H83 and H97. H182 and H196 together coordinate heme b. Residue H201 coordinates a ubiquinone. Transmembrane regions (helical) follow at residues 226–246 (YKDL…ALFA), 288–308 (LGGV…PILH), 320–340 (LTQF…WIGG), and 347–367 (FIII…VLAP).

Belongs to the cytochrome b family. As to quaternary structure, the cytochrome bc1 complex contains 3 respiratory subunits (MT-CYB, CYC1 and UQCRFS1), 2 core proteins (UQCRC1 and UQCRC2) and probably 6 low-molecular weight proteins. Heme b is required as a cofactor.

The protein localises to the mitochondrion inner membrane. Component of the ubiquinol-cytochrome c reductase complex (complex III or cytochrome b-c1 complex) that is part of the mitochondrial respiratory chain. The b-c1 complex mediates electron transfer from ubiquinol to cytochrome c. Contributes to the generation of a proton gradient across the mitochondrial membrane that is then used for ATP synthesis. This Salmo salar (Atlantic salmon) protein is Cytochrome b (mt-cyb).